Consider the following 453-residue polypeptide: Midnolin (453 aa).

Residues 20–94 (MNLNIQSTTG…LTLLPSVEAG (75 aa)) enclose the Ubiquitin-like domain. Disordered stretches follow at residues 185 to 219 (HLAS…TTSV), 231 to 256 (PCAE…RSRK), 330 to 374 (SQAR…QTEN), and 390 to 434 (QKRL…IDFE). Low complexity-rich tracts occupy residues 188 to 204 (SCTP…PTAS) and 239 to 252 (SSRG…SASS). Polar residues predominate over residues 330–362 (SQARNPKATSPQSSEPQQTTHPVGHCQAQTRTC). Positions 365-374 (SGDRLRQTEN) are enriched in basic and acidic residues. The span at 390–399 (QKRLRRKARR) shows a compositional bias: basic residues. The span at 415–428 (RTSSNSSTSSGEGS) shows a compositional bias: low complexity.

It is found in the nucleus. The protein resides in the cytoplasm. It localises to the cytosol. Its subcellular location is the nucleolus. Functionally, facilitates ubiquitin-independent proteasomal degradation of polycomb protein CBX4. Plays a role in inhibiting the activity of glucokinase GCK and both glucose-induced and basal insulin secretion. In Xenopus tropicalis (Western clawed frog), this protein is Midnolin (midn).